Reading from the N-terminus, the 249-residue chain is Acetylglutamate kinase (249 aa).

Substrate contacts are provided by residues 38 to 39 (GG), Arg-60, and Asn-147.

This sequence belongs to the acetylglutamate kinase family. ArgB subfamily.

It is found in the cytoplasm. The catalysed reaction is N-acetyl-L-glutamate + ATP = N-acetyl-L-glutamyl 5-phosphate + ADP. The protein operates within amino-acid biosynthesis; L-arginine biosynthesis; N(2)-acetyl-L-ornithine from L-glutamate: step 2/4. Its function is as follows. Catalyzes the ATP-dependent phosphorylation of N-acetyl-L-glutamate. The polypeptide is Acetylglutamate kinase (Deinococcus geothermalis (strain DSM 11300 / CIP 105573 / AG-3a)).